We begin with the raw amino-acid sequence, 312 residues long: Ribosomal protein L11 methyltransferase (312 aa).

S-adenosyl-L-methionine contacts are provided by Thr162, Gly183, Asp205, and Asn248.

Belongs to the methyltransferase superfamily. PrmA family.

Its subcellular location is the cytoplasm. The enzyme catalyses L-lysyl-[protein] + 3 S-adenosyl-L-methionine = N(6),N(6),N(6)-trimethyl-L-lysyl-[protein] + 3 S-adenosyl-L-homocysteine + 3 H(+). Methylates ribosomal protein L11. In Geobacillus thermodenitrificans (strain NG80-2), this protein is Ribosomal protein L11 methyltransferase.